The following is a 317-amino-acid chain: Putative HTH-type transcriptional regulatory protein NP_1320A (317 aa).

Positions leucine 132–leucine 189 constitute an HTH cro/C1-type domain. A DNA-binding region (H-T-H motif) is located at residues leucine 143 to aspartate 162.

The chain is Putative HTH-type transcriptional regulatory protein NP_1320A from Natronomonas pharaonis (strain ATCC 35678 / DSM 2160 / CIP 103997 / JCM 8858 / NBRC 14720 / NCIMB 2260 / Gabara) (Halobacterium pharaonis).